The chain runs to 941 residues: Pre-mRNA-processing factor 6 (941 aa).

A disordered region spans residues 1–79 (MNKKKKPFLG…DEDLNDTNYD (79 aa)). A compositionally biased stretch (basic and acidic residues) spans 39–65 (DANDPVDDRHAPPGKRTVGDQMKKNQA). Acidic residues predominate over residues 66 to 78 (ADDDDEDLNDTNY). S143 is modified (phosphoserine). Residues T180, T266, and T275 each carry the phosphothreonine modification. Position 279 is a phosphoserine (S279). 9 HAT repeats span residues 384-416 (TDIR…LEEP), 418-444 (DARI…ARLE), 445-476 (TYEN…LEEA), 554-586 (NALE…FEKN), 588-620 (GTRE…SKWL), 622-654 (GDVP…LESE), 689-721 (DNIR…IEEQ), 723-755 (EMME…LEEK), and 855-887 (RKIT…FELQ).

In terms of assembly, identified in the spliceosome B complex. Identified in the spliceosome C complex. Associates with the U5 snRNP particle. Component of the U4/U6-U5 tri-snRNP complex composed of the U4, U6 and U5 snRNAs and at least PRPF3, PRPF4, PRPF6, PRPF8, PRPF31, SNRNP200, TXNL4A, SNRNP40, DDX23, CD2BP2, PPIH, SNU13, EFTUD2, SART1 and USP39, LSm proteins LSm2-8 and Sm proteins. Interacts with ARAF. Interacts with AR and NR3C1, but not ESR1, independently of the presence of hormones. Interacts with USH1G. Phosphorylated by PRP4K during spliceosome assembly. In terms of tissue distribution, widely expressed.

The protein localises to the nucleus. It is found in the nucleoplasm. It localises to the nucleus speckle. Involved in pre-mRNA splicing as component of the U4/U6-U5 tri-snRNP complex, one of the building blocks of the spliceosome. Enhances dihydrotestosterone-induced transactivation activity of AR, as well as dexamethasone-induced transactivation activity of NR3C1, but does not affect estrogen-induced transactivation. This Homo sapiens (Human) protein is Pre-mRNA-processing factor 6.